The chain runs to 512 residues: Circadian clock oscillator protein KaiC (512 aa).

KaiC domains follow at residues 1-243 (MQFP…ISIF) and 257-512 (VRVS…SSED). Residues Gly45, Thr46, Gly47, Lys48, Thr49, Ser85, Lys220, Leu221, Arg222, Thr224, His226, Thr286, Gly287, Thr288, Gly289, Lys290, Thr291, and Leu292 each contribute to the ATP site. Mg(2+) is bound at residue Thr49. Thr291 is a Mg(2+) binding site. Mg(2+) is bound at residue Glu314. Residue Trp327 participates in ATP binding. The residue at position 427 (Ser427) is a Phosphoserine; by autocatalysis. At Thr428 the chain carries Phosphothreonine; by autocatalysis. Residues Arg447, Lys453, Met454, Arg455, Ser457, His459, and Lys461 each contribute to the ATP site.

It belongs to the KaiC family. As to quaternary structure, homohexamer; hexamerization is dependent on ATP-binding. The KaiABC complex composition changes during the circadian cycle to control KaiC phosphorylation. Complexes KaiC(6), KaiA(2-4):KaiC(6), KaiB(6):KaiC(6) and KaiC(6):KaiB(6):KaiA(12) are among the most important forms, many form cooperatively. KaiC interacts with SasA, activating its autokinase function and leading to RpaA activation. It depends on Mg(2+) as a cofactor. Post-translationally, phosphorylated on serine and threonine residues by autocatalysis. Has a 4 step phosphorylation cycle; the autokinase acts first on Thr-428, then Ser-427. When Ser-427 is modified KaiC switches to an autophosphatase mode, acting first on phospho-Thr-428 then phospho-Ser-427.

The enzyme catalyses L-seryl-[protein] + ATP = O-phospho-L-seryl-[protein] + ADP + H(+). It carries out the reaction L-threonyl-[protein] + ATP = O-phospho-L-threonyl-[protein] + ADP + H(+). The catalysed reaction is ATP + H2O = ADP + phosphate + H(+). The interaction with KaiA enhances its phosphorylation status, while the interaction with KaiB decreases it. Central component of the KaiABC oscillator complex, which constitutes the main circadian regulator in cyanobacteria. Complex composition changes during the circadian cycle to control KaiC phosphorylation. KaiA stimulates KaiC autophosphorylation, while KaiB sequesters KaiA, leading to KaiC autodephosphorylation. Clock output pathways impact the RpaA transcriptional regulator. KaiC enhances the autophosphorylation activity of SasA, which then transfers its phosphate group to RpaA to activate it. KaiB and KaiC together enhance the phospho-RpaA dephosphatase activity of CikA. In terms of biological role, has a weak, temperature-independent ATPase activity; ATPase activity defines the circadian period. The phosphorylation state of KaiC modulates its ATPase activity and effects KaiB binding. The protein is Circadian clock oscillator protein KaiC of Parasynechococcus marenigrum (strain WH8102).